Consider the following 311-residue polypeptide: Lipoyl synthase (311 aa).

[4Fe-4S] cluster-binding residues include Cys36, Cys41, Cys47, Cys66, Cys70, Cys73, and Ser280. Residues Arg51–Leu269 enclose the Radical SAM core domain.

This sequence belongs to the radical SAM superfamily. Lipoyl synthase family. It depends on [4Fe-4S] cluster as a cofactor.

Its subcellular location is the cytoplasm. It catalyses the reaction [[Fe-S] cluster scaffold protein carrying a second [4Fe-4S](2+) cluster] + N(6)-octanoyl-L-lysyl-[protein] + 2 oxidized [2Fe-2S]-[ferredoxin] + 2 S-adenosyl-L-methionine + 4 H(+) = [[Fe-S] cluster scaffold protein] + N(6)-[(R)-dihydrolipoyl]-L-lysyl-[protein] + 4 Fe(3+) + 2 hydrogen sulfide + 2 5'-deoxyadenosine + 2 L-methionine + 2 reduced [2Fe-2S]-[ferredoxin]. Its pathway is protein modification; protein lipoylation via endogenous pathway; protein N(6)-(lipoyl)lysine from octanoyl-[acyl-carrier-protein]: step 2/2. Catalyzes the radical-mediated insertion of two sulfur atoms into the C-6 and C-8 positions of the octanoyl moiety bound to the lipoyl domains of lipoate-dependent enzymes, thereby converting the octanoylated domains into lipoylated derivatives. The chain is Lipoyl synthase from Halobacterium salinarum (strain ATCC 29341 / DSM 671 / R1).